Reading from the N-terminus, the 130-residue chain is Small ribosomal subunit protein uS11c (130 aa).

It belongs to the universal ribosomal protein uS11 family. In terms of assembly, part of the 30S ribosomal subunit.

It is found in the plastid. The protein resides in the chloroplast. The chain is Small ribosomal subunit protein uS11c from Pyropia yezoensis (Susabi-nori).